Here is a 353-residue protein sequence, read N- to C-terminus: Nicotinate-nucleotide--dimethylbenzimidazole phosphoribosyltransferase (353 aa).

The Proton acceptor role is filled by E318.

It belongs to the CobT family.

The catalysed reaction is 5,6-dimethylbenzimidazole + nicotinate beta-D-ribonucleotide = alpha-ribazole 5'-phosphate + nicotinate + H(+). Its pathway is nucleoside biosynthesis; alpha-ribazole biosynthesis; alpha-ribazole from 5,6-dimethylbenzimidazole: step 1/2. Its function is as follows. Catalyzes the synthesis of alpha-ribazole-5'-phosphate from nicotinate mononucleotide (NAMN) and 5,6-dimethylbenzimidazole (DMB). The polypeptide is Nicotinate-nucleotide--dimethylbenzimidazole phosphoribosyltransferase (Chloroflexus aggregans (strain MD-66 / DSM 9485)).